The primary structure comprises 488 residues: Ribulose bisphosphate carboxylase large chain (488 aa).

2 residues coordinate substrate: Asn127 and Thr177. The Proton acceptor role is filled by Lys179. Lys181 serves as a coordination point for substrate. Positions 205, 207, and 208 each coordinate Mg(2+). Lys205 bears the N6-carboxylysine mark. Catalysis depends on His297, which acts as the Proton acceptor. The substrate site is built by Arg298, His330, and Ser382.

The protein belongs to the RuBisCO large chain family. Type I subfamily. Heterohexadecamer of 8 large chains and 8 small chains. It depends on Mg(2+) as a cofactor.

The protein localises to the plastid. The protein resides in the chloroplast. The enzyme catalyses 2 (2R)-3-phosphoglycerate + 2 H(+) = D-ribulose 1,5-bisphosphate + CO2 + H2O. It carries out the reaction D-ribulose 1,5-bisphosphate + O2 = 2-phosphoglycolate + (2R)-3-phosphoglycerate + 2 H(+). Functionally, ruBisCO catalyzes two reactions: the carboxylation of D-ribulose 1,5-bisphosphate, the primary event in carbon dioxide fixation, as well as the oxidative fragmentation of the pentose substrate in the photorespiration process. Both reactions occur simultaneously and in competition at the same active site. In Pyropia yezoensis (Susabi-nori), this protein is Ribulose bisphosphate carboxylase large chain.